The chain runs to 227 residues: Ribosomal RNA large subunit methyltransferase E (227 aa).

5 residues coordinate S-adenosyl-L-methionine: G78, W80, D103, D119, and D143. The Proton acceptor role is filled by K183.

Belongs to the class I-like SAM-binding methyltransferase superfamily. RNA methyltransferase RlmE family.

It localises to the cytoplasm. It carries out the reaction uridine(2552) in 23S rRNA + S-adenosyl-L-methionine = 2'-O-methyluridine(2552) in 23S rRNA + S-adenosyl-L-homocysteine + H(+). In terms of biological role, specifically methylates the uridine in position 2552 of 23S rRNA at the 2'-O position of the ribose in the fully assembled 50S ribosomal subunit. The sequence is that of Ribosomal RNA large subunit methyltransferase E from Rickettsia rickettsii (strain Iowa).